The primary structure comprises 388 residues: Putative [LysW]-aminoadipate semialdehyde/glutamate semialdehyde transaminase (388 aa).

Residues 100–101 (GT) and F127 each bind pyridoxal 5'-phosphate. A substrate-binding site is contributed by R130. Residue 211-214 (DEIQ) coordinates pyridoxal 5'-phosphate. At K240 the chain carries N6-(pyridoxal phosphate)lysine. Substrate is bound at residue S268. T269 lines the pyridoxal 5'-phosphate pocket.

The protein belongs to the class-III pyridoxal-phosphate-dependent aminotransferase family. LysJ subfamily. Homodimer. It depends on pyridoxal 5'-phosphate as a cofactor.

It localises to the cytoplasm. It carries out the reaction [amino-group carrier protein]-C-terminal-gamma-(L-lysyl)-L-glutamate + 2-oxoglutarate = [amino-group carrier protein]-C-terminal-N-(1-carboxy-5-oxopentan-1-yl)-L-glutamine + L-glutamate. It catalyses the reaction [amino-group carrier protein]-C-terminal-gamma-(L-ornithyl)-L-glutamate + 2-oxoglutarate = [amino-group carrier protein]-C-terminal-gamma-(L-glutamyl-5-semialdehyde)-L-glutamate + L-glutamate. Its pathway is amino-acid biosynthesis; L-lysine biosynthesis via AAA pathway; L-lysine from L-alpha-aminoadipate (Thermus route): step 4/5. The protein operates within amino-acid biosynthesis; L-arginine biosynthesis. Its function is as follows. Involved in both the arginine and lysine biosynthetic pathways. The protein is Putative [LysW]-aminoadipate semialdehyde/glutamate semialdehyde transaminase of Aeropyrum pernix (strain ATCC 700893 / DSM 11879 / JCM 9820 / NBRC 100138 / K1).